Reading from the N-terminus, the 249-residue chain is tRNA(Phe) (4-demethylwyosine(37)-C(7)) aminocarboxypropyltransferase (249 aa).

Residues Ser80, Arg87, Glu127, and 154-155 each bind S-adenosyl-L-methionine; that span reads DN.

It belongs to the class I-like SAM-binding methyltransferase superfamily. TRM5/TYW2 family.

The protein localises to the cytoplasm. It catalyses the reaction 4-demethylwyosine(37) in tRNA(Phe) + S-adenosyl-L-methionine = 4-demethyl-7-[(3S)-3-amino-3-carboxypropyl]wyosine(37) in tRNA(Phe) + S-methyl-5'-thioadenosine + H(+). S-adenosyl-L-methionine-dependent transferase that acts as a component of the wyosine derivatives biosynthesis pathway. Catalyzes the transfer of the alpha-amino-alpha-carboxypropyl (acp) group from S-adenosyl-L-methionine to 4-demethylwyosine (imG-14), forming 7-aminocarboxypropyl-demethylwyosine (wybutosine-86) at position 37 of tRNA(Phe). The protein is tRNA(Phe) (4-demethylwyosine(37)-C(7)) aminocarboxypropyltransferase of Methanocaldococcus jannaschii (strain ATCC 43067 / DSM 2661 / JAL-1 / JCM 10045 / NBRC 100440) (Methanococcus jannaschii).